The following is an 86-amino-acid chain: Large ribosomal subunit protein bL27 (86 aa).

The disordered stretch occupies residues 1 to 21 (MAHKKAAGSSRNGRDSESKRL).

It belongs to the bacterial ribosomal protein bL27 family.

The chain is Large ribosomal subunit protein bL27 from Hahella chejuensis (strain KCTC 2396).